Here is a 370-residue protein sequence, read N- to C-terminus: Aminomethyltransferase (370 aa).

Belongs to the GcvT family. As to quaternary structure, the glycine cleavage system is composed of four proteins: P, T, L and H.

It catalyses the reaction N(6)-[(R)-S(8)-aminomethyldihydrolipoyl]-L-lysyl-[protein] + (6S)-5,6,7,8-tetrahydrofolate = N(6)-[(R)-dihydrolipoyl]-L-lysyl-[protein] + (6R)-5,10-methylene-5,6,7,8-tetrahydrofolate + NH4(+). The glycine cleavage system catalyzes the degradation of glycine. This chain is Aminomethyltransferase, found in Leptospira biflexa serovar Patoc (strain Patoc 1 / Ames).